A 179-amino-acid chain; its full sequence is Large ribosomal subunit protein uL6 (179 aa).

The protein belongs to the universal ribosomal protein uL6 family. As to quaternary structure, part of the 50S ribosomal subunit.

In terms of biological role, this protein binds to the 23S rRNA, and is important in its secondary structure. It is located near the subunit interface in the base of the L7/L12 stalk, and near the tRNA binding site of the peptidyltransferase center. The sequence is that of Large ribosomal subunit protein uL6 from Beutenbergia cavernae (strain ATCC BAA-8 / DSM 12333 / CCUG 43141 / JCM 11478 / NBRC 16432 / NCIMB 13614 / HKI 0122).